The sequence spans 556 residues: Formate--tetrahydrofolate ligase (556 aa).

ATP is bound at residue 65–72; it reads TPAGEGKT.

Belongs to the formate--tetrahydrofolate ligase family.

The catalysed reaction is (6S)-5,6,7,8-tetrahydrofolate + formate + ATP = (6R)-10-formyltetrahydrofolate + ADP + phosphate. The protein operates within one-carbon metabolism; tetrahydrofolate interconversion. This is Formate--tetrahydrofolate ligase from Ruminiclostridium cellulolyticum (strain ATCC 35319 / DSM 5812 / JCM 6584 / H10) (Clostridium cellulolyticum).